The following is a 289-amino-acid chain: MPSLKDLKNRIGSVKNTRKITKAMQMVAAAKLRRAQEAAEAARPFAERMTAVMTGLAGSVGSSESAPRLLAGTGSDKVHLLVVMTAERGLCGGFNSSIVRLARAHAAKLLTQGKTVKILTVGKKGREQLRRDLGQHFIGHVDLSEVKRMGYPVAQGIARDLLDRFDKGEFDVATIFFARFQSVISQVPTAQQVIPAVFEGEGEVSSLYDYEPSEEGVLADLLPRGVATQIFTALLENGASEQGARMSAMDNATRNAGDMINRLTIEYNRSRQAAITKELIEIISGAEAL.

It belongs to the ATPase gamma chain family. In terms of assembly, F-type ATPases have 2 components, CF(1) - the catalytic core - and CF(0) - the membrane proton channel. CF(1) has five subunits: alpha(3), beta(3), gamma(1), delta(1), epsilon(1). CF(0) has three main subunits: a, b and c.

The protein localises to the cell inner membrane. In terms of biological role, produces ATP from ADP in the presence of a proton gradient across the membrane. The gamma chain is believed to be important in regulating ATPase activity and the flow of protons through the CF(0) complex. The protein is ATP synthase gamma chain of Cereibacter sphaeroides (strain ATCC 17029 / ATH 2.4.9) (Rhodobacter sphaeroides).